We begin with the raw amino-acid sequence, 408 residues long: E3 ubiquitin-protein ligase IE2 (408 aa).

A compositionally biased stretch (polar residues) spans 1-10 (MSRQINAATP). Disordered regions lie at residues 1-67 (MSRQ…ENVQ) and 176-199 (QSPDLFASPQSPQPQQQQQQQSEP). Residues 13–25 (SRRHRLSLSRRRI) are compositionally biased toward basic residues. Over residues 30 to 47 (SPEAQPSSSSRSQPSSSS) the composition is skewed to low complexity. Tandem repeats lie at residues 34–41 (QPSSSSRS), 42–49 (QPSSSSRS), 51–54 (RRQE), and 55–58 (RRQE). The segment at 34-49 (QPSSSSRSQPSSSSRS) is 2 X 8 AA tandem repeats of Q-P-S-S-S-S-R-S. Residues 51–58 (RRQERRQE) are 2 X 4 AA tandem repeats of R-R-Q-E. A compositionally biased stretch (low complexity) spans 183 to 197 (SPQSPQPQQQQQQQS). The segment at 207–255 (CNICFTTFKDTKNVNSSFVTSIHCNHAVCFKCYVKIIMDNSVYKCFCSA) adopts an RING-type zinc-finger fold.

The protein belongs to the alphabaculovirus IE2 protein family. Homooligomer. Auto-ubiquitinated.

The protein resides in the host nucleus. The catalysed reaction is S-ubiquitinyl-[E2 ubiquitin-conjugating enzyme]-L-cysteine + [acceptor protein]-L-lysine = [E2 ubiquitin-conjugating enzyme]-L-cysteine + N(6)-ubiquitinyl-[acceptor protein]-L-lysine.. Its function is as follows. RING-finger E3 ubiquitin ligase that plays an important regulatory role during the initial stages of infection. Migrates to specific nuclear foci early in infection supposely to prepare the sites for viral transcription and replication by targeting and ubiquitinating host proteins. Acts as a transcriptional activator and activates a number of viral promoters including itself, IE1 and the promoter of 39K gene. The polypeptide is E3 ubiquitin-protein ligase IE2 (IE2) (Lepidoptera (butterflies and moths)).